The chain runs to 306 residues: GTPase IMAP family member 1 (306 aa).

A disordered region spans residues 1-21; the sequence is MGGRKMATDEENVYGLEENAQ. The Cytoplasmic segment spans residues 1–272; it reads MGGRKMATDE…RLWKWLKSPR (272 aa). One can recognise an AIG1-type G domain in the interval 25 to 229; it reads ESTRRLILVG…YSNEVYELAQ (205 aa). Positions 34–41 are G1; sequence GRTGAGKS. GTP is bound by residues 34 to 42 and Ser-55; that span reads GRTGAGKSA. Residues 61–65 form a G2 region; the sequence is SVTRA. The tract at residues 82–85 is G3; it reads DTPD. Positions 152–155 are G4; it reads TRKE. GTP contacts are provided by residues 153 to 155 and Asn-190; that span reads RKE. The interval 189 to 191 is G5; that stretch reads DNR. A helical; Anchor for type IV membrane protein membrane pass occupies residues 273 to 292; that stretch reads SWRLGLALLLGGALLFWVLL. The Lumenal portion of the chain corresponds to 293–306; sequence HRRWSEAVAEVGPD.

Belongs to the TRAFAC class TrmE-Era-EngA-EngB-Septin-like GTPase superfamily. AIG1/Toc34/Toc159-like paraseptin GTPase family. IAN subfamily. As to expression, predominantly expressed in the spleen and to a lesser extent in the lymph nodes. Detected in T-cells.

It is found in the endoplasmic reticulum membrane. Its subcellular location is the golgi apparatus membrane. Its function is as follows. May regulate lymphocyte survival. Required for normal levels of mature T-lymphocytes and mature B-cells. This Homo sapiens (Human) protein is GTPase IMAP family member 1 (GIMAP1).